Reading from the N-terminus, the 560-residue chain is Diphtheria toxin homolog CRM228 (560 aa).

Residues 1–25 (MSRKLFASILIGALLGIGAPPSAHA) form the signal peptide. NAD(+) contacts are provided by His46 and Tyr90. Glu173 is a catalytic residue. Cystine bridges form between Cys211/Cys226 and Cys486/Cys496.

This is Diphtheria toxin homolog CRM228 from Corynebacterium diphtheriae.